Here is a 175-residue protein sequence, read N- to C-terminus: Trafficking protein particle complex subunit 20 (175 aa).

It belongs to the TRAPP small subunits family. Sedlin subfamily. In terms of assembly, part of the multisubunit TRAPP (transport protein particle) I complex composed of BET3, BET5, TRS20, TRS23, TRS31 and TRS33. Part of the multisubunit TRAPP (transport protein particle) II complex composed of BET3, BET5, TRS20, TRS23, TRS31, TRS33, TRS65, TRS85, TRS120 and TRS130. Part of the multisubunit TRAPP (transport protein particle) III complex composed of BET3, BET5, TRS20, TRS23, TRS31, TRS33 and TRS85.

It is found in the golgi apparatus. It localises to the cis-Golgi network. The protein resides in the endoplasmic reticulum. The protein localises to the preautophagosomal structure. Functionally, component of the TRAPP I, TRAPP II and TRAPP III complexes which act as guanine nucleotide exchange factors (GEF) for YPT1. TRAPP I plays a key role in the late stages of endoplasmic reticulum to Golgi traffic. TRAPP II plays a role in intra-Golgi transport. TRAPP III plays a role in autophagosome formation. The polypeptide is Trafficking protein particle complex subunit 20 (TRS20) (Saccharomyces cerevisiae (strain ATCC 204508 / S288c) (Baker's yeast)).